The chain runs to 144 residues: Large ribosomal subunit protein uL15 (144 aa).

The segment at 1–49 (MKLNTLSPAAGAKSAAKRVGRGIGSGLGKTAGRGHKGQKSRSGGGVRVG) is disordered. Positions 21-31 (RGIGSGLGKTA) are enriched in gly residues.

It belongs to the universal ribosomal protein uL15 family. As to quaternary structure, part of the 50S ribosomal subunit.

Functionally, binds to the 23S rRNA. The protein is Large ribosomal subunit protein uL15 of Shewanella loihica (strain ATCC BAA-1088 / PV-4).